The chain runs to 295 residues: Hepatic leukemia factor (295 aa).

Positions 34–52 (LHPEDAFSKDRDKGKKLDD) are enriched in basic and acidic residues. Disordered regions lie at residues 34–69 (LHPEDAFSKDRDKGKKLDDGSNSPTVPQSAFLGPTL) and 93–160 (SENG…NRNT). One can recognise a bZIP domain in the interval 225-288 (DDKYWARRRK…GKCKNILAKY (64 aa)). Residues 227 to 247 (KYWARRRKNNMAAKRSRDARR) form a basic motif region. The tract at residues 248–255 (LKENQIAI) is leucine-zipper.

This sequence belongs to the bZIP family. PAR subfamily. As to quaternary structure, binds DNA specifically as homodimer or heterodimer with other PAR factors. In terms of tissue distribution, isoform HLF43 is abundant in brain, liver and kidney. Isoform HLF36 is expressed only in the liver. Both isoforms accumulate in the liver with different circadian amplitudes. Isoform HLF36 reaches peak expression levels between 8 and 12 p.m. Isoform HLF43 displays a more pronounced fluctuation through the day.

It is found in the nucleus. The polypeptide is Hepatic leukemia factor (Hlf) (Rattus norvegicus (Rat)).